The following is a 343-amino-acid chain: Uroporphyrinogen decarboxylase (343 aa).

Substrate is bound by residues 21–25, Asp71, Tyr148, Ser203, and His316; that span reads RQAGR.

The protein belongs to the uroporphyrinogen decarboxylase family. As to quaternary structure, homodimer.

The protein localises to the cytoplasm. It catalyses the reaction uroporphyrinogen III + 4 H(+) = coproporphyrinogen III + 4 CO2. It participates in porphyrin-containing compound metabolism; protoporphyrin-IX biosynthesis; coproporphyrinogen-III from 5-aminolevulinate: step 4/4. Its function is as follows. Catalyzes the decarboxylation of four acetate groups of uroporphyrinogen-III to yield coproporphyrinogen-III. The sequence is that of Uroporphyrinogen decarboxylase from Campylobacter fetus subsp. fetus (strain 82-40).